Here is a 307-residue protein sequence, read N- to C-terminus: tRNA-cytidine(32) 2-sulfurtransferase (307 aa).

Residues 44–49 (SGGKDS) carry the PP-loop motif motif. 3 residues coordinate [4Fe-4S] cluster: Cys119, Cys122, and Cys210.

This sequence belongs to the TtcA family. As to quaternary structure, homodimer. Mg(2+) is required as a cofactor. The cofactor is [4Fe-4S] cluster.

Its subcellular location is the cytoplasm. The catalysed reaction is cytidine(32) in tRNA + S-sulfanyl-L-cysteinyl-[cysteine desulfurase] + AH2 + ATP = 2-thiocytidine(32) in tRNA + L-cysteinyl-[cysteine desulfurase] + A + AMP + diphosphate + H(+). It functions in the pathway tRNA modification. In terms of biological role, catalyzes the ATP-dependent 2-thiolation of cytidine in position 32 of tRNA, to form 2-thiocytidine (s(2)C32). The sulfur atoms are provided by the cysteine/cysteine desulfurase (IscS) system. This Aliivibrio salmonicida (strain LFI1238) (Vibrio salmonicida (strain LFI1238)) protein is tRNA-cytidine(32) 2-sulfurtransferase.